We begin with the raw amino-acid sequence, 81 residues long: Cortexin-2 (81 aa).

A helical transmembrane segment spans residues 29–49 (TGFAFVGILCIFLGLLIIRCF).

This sequence belongs to the cortexin family.

It localises to the membrane. The polypeptide is Cortexin-2 (CTXN2) (Homo sapiens (Human)).